Reading from the N-terminus, the 211-residue chain is 3-demethoxyubiquinol 3-hydroxylase (211 aa).

Residues Glu-60, Glu-90, His-93, Glu-142, Glu-174, and His-177 each contribute to the Fe cation site.

Belongs to the COQ7 family. Fe cation is required as a cofactor.

It is found in the cell membrane. It carries out the reaction a 5-methoxy-2-methyl-3-(all-trans-polyprenyl)benzene-1,4-diol + AH2 + O2 = a 3-demethylubiquinol + A + H2O. It functions in the pathway cofactor biosynthesis; ubiquinone biosynthesis. Catalyzes the hydroxylation of 2-nonaprenyl-3-methyl-6-methoxy-1,4-benzoquinol during ubiquinone biosynthesis. In Acinetobacter baumannii (strain AB307-0294), this protein is 3-demethoxyubiquinol 3-hydroxylase.